The following is a 164-amino-acid chain: Transcription elongation factor GreA (164 aa).

A coiled-coil region spans residues 15 to 76 (DRLKNELDQL…LQELLNSAKV (62 aa)).

The protein belongs to the GreA/GreB family.

In terms of biological role, necessary for efficient RNA polymerase transcription elongation past template-encoded arresting sites. The arresting sites in DNA have the property of trapping a certain fraction of elongating RNA polymerases that pass through, resulting in locked ternary complexes. Cleavage of the nascent transcript by cleavage factors such as GreA or GreB allows the resumption of elongation from the new 3'terminus. GreA releases sequences of 2 to 3 nucleotides. The chain is Transcription elongation factor GreA from Rhodococcus erythropolis (strain PR4 / NBRC 100887).